The chain runs to 358 residues: Hydroxyproline O-arabinosyltransferase 3 (358 aa).

Residues 8–28 (LLFLLGFGFFVVTYNLLTLIV) form a helical; Signal-anchor membrane-spanning segment.

Ubiquitous.

The protein localises to the golgi apparatus. The protein resides in the cis-Golgi network membrane. It carries out the reaction trans-4-hydroxy-L-prolyl-[protein] + UDP-beta-L-arabinofuranose = O-(beta-L-arabinofuranosyl)-trans-4-hydroxy-L-prolyl-[protein] + UDP + H(+). Functionally, glycosyltransferase involved in the O-arabinosylation of several proteins including extensins and small signaling peptides. Catalyzes the transfer of the initial L-arabinose to the hydroxyl group of Hyp residues. Contributes redundantly with HPAT1 and HPAT2 to arabinosylation of EXT3, but main contributor to arabinosylation of CLE peptides. The polypeptide is Hydroxyproline O-arabinosyltransferase 3 (Arabidopsis thaliana (Mouse-ear cress)).